We begin with the raw amino-acid sequence, 451 residues long: Pre-mRNA-splicing factor PRP46 (451 aa).

7 WD repeats span residues 137–168 (GHLGWVRCVAIDPVDNEWFITGSNDTTMKVWD), 180–210 (GHVMTVRDVAVSDRHPYLFSVSEDKTVKCWD), 222–252 (GHLSGVRTVSIHPTLDLIATAGRDSVIKLWD), 264–294 (GHKGPINQVQCTPVDPQVVSSSTDATVRLWD), 306–335 (HHKRSVRATALHPKEFSVASACTDDIRSWG), 348–377 (EKTGIINTLSINQDDVLFAGGDNGVLSFYD), and 397–427 (EGERSVLCSTFDKTGLRLITGEADKSIKIWK).

This sequence belongs to the WD repeat PRL1/PRL2 family. As to quaternary structure, belongs to the CWC complex (or CEF1-associated complex), a spliceosome subcomplex composed of the U2, U5 and U6 snRNAs and at least BUD13, BUD31, BRR2, CDC40, CEF1, CLF1, CUS1, CWC2, CWC15, CWC21, CWC22, CWC23, CWC24, CWC25, CWC27, ECM2, HSH155, IST3, ISY1, LEA1, MSL1, NTC20, PRP8, PRP9, PRP11, PRP19, PRP21, PRP22, PRP45, PRP46, SLU7, SMB1, SMD1, SMD2, SMD3, SMX2, SMX3, SNT309, SNU114, SPP2, SYF1, SYF2, RSE1 and YJU2. Interacts with CEF1, CLF1, NTC20, PRP45 and SYF1.

It is found in the cytoplasm. It localises to the nucleus. Functionally, involved in pre-mRNA splicing. May also be required for cell cycle progression at G2/M. The chain is Pre-mRNA-splicing factor PRP46 (PRP46) from Saccharomyces cerevisiae (strain ATCC 204508 / S288c) (Baker's yeast).